Reading from the N-terminus, the 460-residue chain is ATP synthase subunit beta (460 aa).

150 to 157 (GGAGVGKT) is a binding site for ATP.

It belongs to the ATPase alpha/beta chains family. As to quaternary structure, F-type ATPases have 2 components, CF(1) - the catalytic core - and CF(0) - the membrane proton channel. CF(1) has five subunits: alpha(3), beta(3), gamma(1), delta(1), epsilon(1). CF(0) has three main subunits: a(1), b(2) and c(9-12). The alpha and beta chains form an alternating ring which encloses part of the gamma chain. CF(1) is attached to CF(0) by a central stalk formed by the gamma and epsilon chains, while a peripheral stalk is formed by the delta and b chains.

It localises to the cell inner membrane. The enzyme catalyses ATP + H2O + 4 H(+)(in) = ADP + phosphate + 5 H(+)(out). In terms of biological role, produces ATP from ADP in the presence of a proton gradient across the membrane. The catalytic sites are hosted primarily by the beta subunits. This Escherichia coli (strain SMS-3-5 / SECEC) protein is ATP synthase subunit beta.